The chain runs to 217 residues: Adapter protein MecA (217 aa).

It belongs to the MecA family. In terms of assembly, homodimer.

Enables the recognition and targeting of unfolded and aggregated proteins to the ClpC protease or to other proteins involved in proteolysis. In Listeria welshimeri serovar 6b (strain ATCC 35897 / DSM 20650 / CCUG 15529 / CIP 8149 / NCTC 11857 / SLCC 5334 / V8), this protein is Adapter protein MecA.